Consider the following 59-residue polypeptide: Prokaryotic ubiquitin-like protein UBact (59 aa).

Positions 1–59 (MEMTDPLRREEKKESSPDPKEESGPSRPDVSRPGRDSLLKRMKKVDPKQSEKYKQRTGQ) are disordered. Gln-59 is modified (deamidated glutamine). Gln-59 participates in a covalent cross-link: Isoglutamyl lysine isopeptide (Gln-Lys) (interchain with K-? in acceptor proteins).

It belongs to the ubiquitin-like protein UBact family. In terms of processing, may be modified by deamidation of its C-terminal glutamine to glutamate by the adjacently encoded deamidase. This could be a prerequisite to the subsequent conjugation, as shown in the other prokaryotic ubiquitin-like protein Pup.

Its function is as follows. May function as a protein modifier covalently attached to lysine residues of substrate proteins. This may serve to target the modified proteins for degradation by proteasomes. The chain is Prokaryotic ubiquitin-like protein UBact from Nitrospina gracilis (strain 3/211).